Reading from the N-terminus, the 122-residue chain is MIPGEYFISKGDIECNVDRKTTKIKVINTGDRPIQVGSHCHFFEINRMMSFDRSEAFGMRLNIAAGTAVRFEPGEEKEVELVAFSGARRAFGINNIVNGDTTLEINKQHSLAKLKTENFKNK.

This sequence belongs to the urease beta subunit family. In terms of assembly, heterotrimer of UreA (gamma), UreB (beta) and UreC (alpha) subunits. Three heterotrimers associate to form the active enzyme.

It is found in the cytoplasm. It catalyses the reaction urea + 2 H2O + H(+) = hydrogencarbonate + 2 NH4(+). It participates in nitrogen metabolism; urea degradation; CO(2) and NH(3) from urea (urease route): step 1/1. The protein is Urease subunit beta of Flavobacterium johnsoniae (strain ATCC 17061 / DSM 2064 / JCM 8514 / BCRC 14874 / CCUG 350202 / NBRC 14942 / NCIMB 11054 / UW101) (Cytophaga johnsonae).